The following is a 495-amino-acid chain: Trimethylamine methyltransferase MttB (495 aa).

Pyrrolysine 334 is a non-standard amino acid (pyrrolysine).

This sequence belongs to the trimethylamine methyltransferase family.

The enzyme catalyses Co(I)-[trimethylamine-specific corrinoid protein] + trimethylamine + H(+) = methyl-Co(III)-[trimethylamine-specific corrinoid protein] + dimethylamine. Its pathway is one-carbon metabolism; methanogenesis from trimethylamine. In terms of biological role, catalyzes the transfer of a methyl group from trimethylamine to the corrinoid cofactor of MttC. This is Trimethylamine methyltransferase MttB (mttB) from Methanosarcina barkeri (strain Fusaro / DSM 804).